Consider the following 277-residue polypeptide: F420-dependent methylenetetrahydromethanopterin dehydrogenase (277 aa).

The protein belongs to the MTD family.

It catalyses the reaction 5,10-methylenetetrahydromethanopterin + oxidized coenzyme F420-(gamma-L-Glu)(n) + 2 H(+) = 5,10-methenyl-5,6,7,8-tetrahydromethanopterin + reduced coenzyme F420-(gamma-L-Glu)(n). It participates in one-carbon metabolism; methanogenesis from CO(2); 5,10-methylene-5,6,7,8-tetrahydromethanopterin from 5,10-methenyl-5,6,7,8-tetrahydromethanopterin (coenzyme F420 route): step 1/1. In terms of biological role, catalyzes the reversible reduction of methenyl-H(4)MPT(+) to methylene-H(4)MPT. The polypeptide is F420-dependent methylenetetrahydromethanopterin dehydrogenase (Methanococcus maripaludis (strain C7 / ATCC BAA-1331)).